The sequence spans 562 residues: Teichoic acid ribitol-phosphate polymerase TarL (562 aa).

Belongs to the CDP-glycerol glycerophosphotransferase family.

It is found in the cell membrane. The enzyme catalyses 4-O-[di(2R)-glycerylphospho]-N-acetyl-beta-D-mannosaminyl-(1-&gt;4)-N-acetyl-alpha-D-glucosaminyl di-trans,octa-cis-undecaprenyl diphosphate + n CDP-L-ribitol = 4-O-[(D-ribitylphospho)(n)-di{(2R)-glycerylphospho}]-N-acetyl-beta-D-mannosaminyl-(1-&gt;4)-N-acetyl-alpha-D-glucosaminyl di-trans,octa-cis-undecaprenyl diphosphate + n CMP + n H(+). It functions in the pathway cell wall biogenesis; poly(ribitol phosphate) teichoic acid biosynthesis. Its function is as follows. Responsible for the polymerization of the main chain of the major teichoic acid by sequential transfer of ribitol phosphate units from CDP-ribitol to the second glycerol phosphate attached to the disaccharide linkage unit. Synthesizes polymers of more than 40 ribitol phosphate units in length. This Staphylococcus aureus (strain NCTC 8325 / PS 47) protein is Teichoic acid ribitol-phosphate polymerase TarL (tarL).